We begin with the raw amino-acid sequence, 504 residues long: Maturase K (504 aa).

Belongs to the intron maturase 2 family. MatK subfamily.

It is found in the plastid. It localises to the chloroplast. Its function is as follows. Usually encoded in the trnK tRNA gene intron. Probably assists in splicing its own and other chloroplast group II introns. This chain is Maturase K, found in Cucumis sativus (Cucumber).